Reading from the N-terminus, the 318-residue chain is Lysophospholipase D GDPD3 (318 aa).

The Cytoplasmic segment spans residues 1–2 (MS). A helical transmembrane segment spans residues 3-23 (LLLYYALPALGSYAMLSIFFL). The Extracellular portion of the chain corresponds to 24-198 (RRPHLLHTPR…KAANPEMPLS (175 aa)). A GP-PDE domain is found at 39–308 (IRLGAHRGGS…DYPTALRHYL (270 aa)). A divalent metal cation is bound by residues glutamate 71, aspartate 73, and histidine 86. The chain crosses the membrane as a helical span at residues 199-221 (FTISRGFWVLLSYYLGLLPFIPI). Topologically, residues 222–318 (PEKFFFCFLP…DNHGPAARTS (97 aa)) are cytoplasmic.

This sequence belongs to the glycerophosphoryl diester phosphodiesterase family. In terms of tissue distribution, widely expressed, with high level in kidney and ovary.

It localises to the membrane. The protein resides in the cytoplasm. The protein localises to the perinuclear region. Its subcellular location is the endoplasmic reticulum. The enzyme catalyses 1-hexadecanoyl-sn-glycero-3-phosphocholine + H2O = 1-hexadecanoyl-sn-glycero-3-phosphate + choline + H(+). It catalyses the reaction 1-hexadecanoyl-sn-glycero-3-phosphocholine + H2O = sn-glycerol 3-phosphocholine + hexadecanoate + H(+). The catalysed reaction is 1-O-(1Z-octadecenyl)-sn-glycero-3-phospho-N-hexadecanoyl-ethanolamine + H2O = 1-O-(1Z-octadecenyl)-sn-glycero-3-phosphate + N-hexadecanoylethanolamine + H(+). It carries out the reaction N-(5Z,8Z,11Z,14Z-eicosatetraenoyl)-1-(9Z-octadecenoyl)-sn-glycero-3-phosphoethanolamine + H2O = N-(5Z,8Z,11Z,14Z-eicosatetraenoyl)-ethanolamine + 1-(9Z-octadecenoyl)-sn-glycero-3-phosphate + H(+). The enzyme catalyses N,1-di-(9Z-octadecenoyl)-sn-glycero-3-phosphoethanolamine + H2O = N-(9Z-octadecenoyl) ethanolamine + 1-(9Z-octadecenoyl)-sn-glycero-3-phosphate + H(+). It catalyses the reaction N-hexadecanoyl-1-(9Z-octadecenoyl)-sn-glycero-3-phosphoethanolamine + H2O = N-hexadecanoylethanolamine + 1-(9Z-octadecenoyl)-sn-glycero-3-phosphate + H(+). The catalysed reaction is 1-O-hexadecyl-sn-glycero-3-phosphocholine + H2O = 1-O-hexadecyl-sn-glycero-3-phosphate + choline + H(+). With respect to regulation, lysophospholipase D activity is stimulated by calcium. Loss of lysophospholipase D activity in presence of EDTA. Its function is as follows. Hydrolyzes lysoglycerophospholipids to produce lysophosphatidic acid (LPA) and the corresponding amines. Shows a preference for 1-O-alkyl-sn-glycero-3-phosphocholine (lyso-PAF), lysophosphatidylcholine (lyso-PC) and N-acylethanolamine lysophospholipids. Does not display glycerophosphodiester phosphodiesterase activity, since it cannot hydrolyze either glycerophosphoinositol or glycerophosphocholine. The protein is Lysophospholipase D GDPD3 of Homo sapiens (Human).